The following is a 501-amino-acid chain: Cytochrome P450 71B3 (501 aa).

Residues 2–22 form a helical membrane-spanning segment; that stretch reads SILLYFFFLPVILSLIFMKKF. C445 serves as a coordination point for heme.

It belongs to the cytochrome P450 family. Heme is required as a cofactor.

It is found in the membrane. In Arabidopsis thaliana (Mouse-ear cress), this protein is Cytochrome P450 71B3 (CYP71B3).